A 612-amino-acid chain; its full sequence is Alpha-glycerophosphate oxidase (612 aa).

Residue 21–49 participates in FAD binding; it reads DLLIIGGGITGAGVALQAAASGLDTGLIE. Basic and acidic residues predominate over residues 398-408; sequence VETSTSEKELD. The segment at 398-418 is disordered; it reads VETSTSEKELDPSAVSRGSSF.

The protein belongs to the FAD-dependent glycerol-3-phosphate dehydrogenase family. FAD serves as cofactor.

It localises to the cytoplasm. The enzyme catalyses sn-glycerol 3-phosphate + O2 = dihydroxyacetone phosphate + H2O2. In Streptococcus pyogenes serotype M3 (strain ATCC BAA-595 / MGAS315), this protein is Alpha-glycerophosphate oxidase (glpO).